We begin with the raw amino-acid sequence, 116 residues long: NADH-ubiquinone oxidoreductase chain 3 (116 aa).

Helical transmembrane passes span 4–24, 56–76, and 88–108; these read LIIT…IAFW, FFLI…LLPL, and TLIL…YEWI.

It belongs to the complex I subunit 3 family. Core subunit of respiratory chain NADH dehydrogenase (Complex I) which is composed of 45 different subunits. Interacts with TMEM186. Interacts with TMEM242.

It is found in the mitochondrion inner membrane. It catalyses the reaction a ubiquinone + NADH + 5 H(+)(in) = a ubiquinol + NAD(+) + 4 H(+)(out). Functionally, core subunit of the mitochondrial membrane respiratory chain NADH dehydrogenase (Complex I) which catalyzes electron transfer from NADH through the respiratory chain, using ubiquinone as an electron acceptor. Essential for the catalytic activity of complex I. The protein is NADH-ubiquinone oxidoreductase chain 3 of Osphranter robustus (Wallaroo).